Here is a 693-residue protein sequence, read N- to C-terminus: Polyribonucleotide nucleotidyltransferase (693 aa).

Asp-489 and Asp-495 together coordinate Mg(2+). The 60-residue stretch at 556-615 (PQIHVMNINPAKIKDVVGRGGATVKGIVEKTGAQIDTSDSGEVKVFAKDKKSMDMAVAMI) folds into the KH domain. The 69-residue stretch at 625–693 (GQVYKGKIVK…GRVKLSLVAR (69 aa)) folds into the S1 motif domain.

The protein belongs to the polyribonucleotide nucleotidyltransferase family. In terms of assembly, component of the RNA degradosome, which is a multiprotein complex involved in RNA processing and mRNA degradation. The cofactor is Mg(2+).

It localises to the cytoplasm. The enzyme catalyses RNA(n+1) + phosphate = RNA(n) + a ribonucleoside 5'-diphosphate. Its function is as follows. Involved in mRNA degradation. Catalyzes the phosphorolysis of single-stranded polyribonucleotides processively in the 3'- to 5'-direction. The sequence is that of Polyribonucleotide nucleotidyltransferase from Francisella tularensis subsp. novicida (strain U112).